The sequence spans 219 residues: Octanoyltransferase (219 aa).

In terms of domain architecture, BPL/LPL catalytic spans 31-206 (DEDVDQIWLV…ELVELLGYDQ (176 aa)). Residues 70-77 (RGGQVTYH), 137-139 (SLG), and 150-152 (GLA) contribute to the substrate site. Cys-168 acts as the Acyl-thioester intermediate in catalysis.

The protein belongs to the LipB family.

The protein resides in the cytoplasm. It carries out the reaction octanoyl-[ACP] + L-lysyl-[protein] = N(6)-octanoyl-L-lysyl-[protein] + holo-[ACP] + H(+). It functions in the pathway protein modification; protein lipoylation via endogenous pathway; protein N(6)-(lipoyl)lysine from octanoyl-[acyl-carrier-protein]: step 1/2. Catalyzes the transfer of endogenously produced octanoic acid from octanoyl-acyl-carrier-protein onto the lipoyl domains of lipoate-dependent enzymes. Lipoyl-ACP can also act as a substrate although octanoyl-ACP is likely to be the physiological substrate. This chain is Octanoyltransferase, found in Vibrio atlanticus (strain LGP32) (Vibrio splendidus (strain Mel32)).